Here is a 120-residue protein sequence, read N- to C-terminus: UPF0102 protein Caur_2698 (120 aa).

This sequence belongs to the UPF0102 family.

The polypeptide is UPF0102 protein Caur_2698 (Chloroflexus aurantiacus (strain ATCC 29366 / DSM 635 / J-10-fl)).